Reading from the N-terminus, the 255-residue chain is Thiazole synthase (255 aa).

Catalysis depends on lysine 97, which acts as the Schiff-base intermediate with DXP. 1-deoxy-D-xylulose 5-phosphate contacts are provided by residues glycine 158, 184-185 (AG), and 206-207 (NT).

This sequence belongs to the ThiG family. In terms of assembly, homotetramer. Forms heterodimers with either ThiH or ThiS.

It localises to the cytoplasm. It catalyses the reaction [ThiS sulfur-carrier protein]-C-terminal-Gly-aminoethanethioate + 2-iminoacetate + 1-deoxy-D-xylulose 5-phosphate = [ThiS sulfur-carrier protein]-C-terminal Gly-Gly + 2-[(2R,5Z)-2-carboxy-4-methylthiazol-5(2H)-ylidene]ethyl phosphate + 2 H2O + H(+). Its pathway is cofactor biosynthesis; thiamine diphosphate biosynthesis. Its function is as follows. Catalyzes the rearrangement of 1-deoxy-D-xylulose 5-phosphate (DXP) to produce the thiazole phosphate moiety of thiamine. Sulfur is provided by the thiocarboxylate moiety of the carrier protein ThiS. In vitro, sulfur can be provided by H(2)S. This Acetivibrio thermocellus (strain ATCC 27405 / DSM 1237 / JCM 9322 / NBRC 103400 / NCIMB 10682 / NRRL B-4536 / VPI 7372) (Clostridium thermocellum) protein is Thiazole synthase.